The sequence spans 985 residues: NAD kinase 2, chloroplastic (985 aa).

Residues 1 to 62 constitute a chloroplast transit peptide; it reads MFLCFCPCHV…KRRLRFVIRA (62 aa). Residues 335 to 380 form a calmodulin-binding region; it reads APKAEQVELFASIVSDSSKRPIYVHSKEGVWRTSAMVSRWKQYMTR. 2 disordered regions span residues 389–466 and 548–615; these read SEES…PPGN and FSNG…DEAG. 2 stretches are compositionally biased toward basic and acidic residues: residues 390-399 and 413-429; these read EESKRREVSE and VPDE…EVDS. Residues 548–569 show a composition bias toward polar residues; the sequence is FSNGNVHASDNTNKSISDNRGN.

It belongs to the NAD kinase family. Expressed in leaves.

It localises to the plastid. It is found in the chloroplast. It catalyses the reaction NAD(+) + ATP = ADP + NADP(+) + H(+). Its function is as follows. Involved in chlorophyll synthesis and chloroplast protection against oxidative damage. The chain is NAD kinase 2, chloroplastic (NADK2) from Arabidopsis thaliana (Mouse-ear cress).